A 379-amino-acid polypeptide reads, in one-letter code: DNA replication and repair protein RecF (379 aa).

An ATP-binding site is contributed by 30–37 (GDNAQGKS).

The protein belongs to the RecF family.

The protein localises to the cytoplasm. In terms of biological role, the RecF protein is involved in DNA metabolism; it is required for DNA replication and normal SOS inducibility. RecF binds preferentially to single-stranded, linear DNA. It also seems to bind ATP. The polypeptide is DNA replication and repair protein RecF (Thermosynechococcus vestitus (strain NIES-2133 / IAM M-273 / BP-1)).